The chain runs to 238 residues: Sugar fermentation stimulation protein homolog (238 aa).

The protein belongs to the SfsA family.

The polypeptide is Sugar fermentation stimulation protein homolog (Vibrio vulnificus (strain CMCP6)).